The sequence spans 308 residues: Putative transcription elongation factor S-II (308 aa).

Residues 5-84 (EETQSLCKQV…KDWKNVVDGK (80 aa)) enclose the TFIIS N-terminal domain. Residues 82 to 126 (DGKSKSQDDGGAPPAKKHRKESVEEAKPEKKKIEAPYKRPEPSSR) are disordered. A compositionally biased stretch (basic and acidic residues) spans 102-125 (ESVEEAKPEKKKIEAPYKRPEPSS). The TFIIS central domain occupies 148–263 (TRLKSAQLLL…EHQMSVQQGT (116 aa)). A TFIIS-type zinc finger spans residues 266-306 (DMFKCGKCGKKNCTYTQLQTRSSDEPMTTFVFCLECGNRWK). Residues Cys270, Cys273, Cys298, and Cys301 each coordinate Zn(2+).

Belongs to the TFS-II family.

It localises to the nucleus. Its function is as follows. Necessary for efficient RNA polymerase II transcription elongation past template-encoded arresting sites. The arresting sites in DNA have the property of trapping a certain fraction of elongating RNA polymerases that pass through, resulting in locked ternary complexes. Cleavage of the nascent transcript by S-II allows the resumption of elongation from the new 3'-terminus. The sequence is that of Putative transcription elongation factor S-II from Caenorhabditis elegans.